Reading from the N-terminus, the 192-residue chain is 7-methyl-GTP pyrophosphatase (192 aa).

The Proton acceptor role is filled by D69.

It belongs to the Maf family. YceF subfamily. The cofactor is a divalent metal cation.

The protein localises to the cytoplasm. The enzyme catalyses N(7)-methyl-GTP + H2O = N(7)-methyl-GMP + diphosphate + H(+). Functionally, nucleoside triphosphate pyrophosphatase that hydrolyzes 7-methyl-GTP (m(7)GTP). May have a dual role in cell division arrest and in preventing the incorporation of modified nucleotides into cellular nucleic acids. The protein is 7-methyl-GTP pyrophosphatase of Pseudomonas syringae pv. syringae (strain B728a).